Here is a 345-residue protein sequence, read N- to C-terminus: MPKAYENAGVSVEAGYEVVKRIKSHVARTNRPGVVGGIGGFGGLFDLASLGYKEPVLISGTDGVGTKLMVAKLANKHNTIGIDCVAMCVNDIAAQGAEPLFFLDYIACGKNDPALLEQVVAGVADGCVQAGSALVGGETAEMPGMYDEDEYDLAGFSIGVAEKSAIVDGSTIVEGDVLIGLPSTGVHSNGFSLVRKALFEQAGYTVDTKLDELGGEKLGDVLLTPTKIYVKALSPLFKAGVVKGVAHITGGGFIENIPRMIPDGLAAEIELGTWPVLPIFDVLEKAGNIDHKEMYNIFNMGIGMVLAIDPARKDEALKLLADNNEPAYVLGQITADTTGTQIVLK.

It belongs to the AIR synthase family.

It localises to the cytoplasm. It carries out the reaction 2-formamido-N(1)-(5-O-phospho-beta-D-ribosyl)acetamidine + ATP = 5-amino-1-(5-phospho-beta-D-ribosyl)imidazole + ADP + phosphate + H(+). The protein operates within purine metabolism; IMP biosynthesis via de novo pathway; 5-amino-1-(5-phospho-D-ribosyl)imidazole from N(2)-formyl-N(1)-(5-phospho-D-ribosyl)glycinamide: step 2/2. This is Phosphoribosylformylglycinamidine cyclo-ligase from Bifidobacterium longum subsp. infantis (strain ATCC 15697 / DSM 20088 / JCM 1222 / NCTC 11817 / S12).